Consider the following 700-residue polypeptide: Polyphosphate kinase (700 aa).

ATP is bound at residue Asn-45. Arg-373 and Arg-403 together coordinate Mg(2+). Residues 428–462 (PGMKIHAKLLLITRREEQGFVRYAHIGTGNFHERT) enclose the PLD phosphodiesterase 1 domain. His-433 functions as the Phosphohistidine intermediate in the catalytic mechanism. Residues Tyr-466, Arg-562, and His-590 each contribute to the ATP site. Residues 585–615 (DRFLEHPRVLVVHNDGDPQVFISSADWMERN) form the PLD phosphodiesterase 2 domain.

Belongs to the polyphosphate kinase 1 (PPK1) family. Mg(2+) is required as a cofactor. Post-translationally, an intermediate of this reaction is the autophosphorylated ppk in which a phosphate is covalently linked to a histidine residue through a N-P bond.

The catalysed reaction is [phosphate](n) + ATP = [phosphate](n+1) + ADP. Its function is as follows. Catalyzes the reversible transfer of the terminal phosphate of ATP to form a long-chain polyphosphate (polyP). This Vibrio vulnificus (strain CMCP6) protein is Polyphosphate kinase.